Reading from the N-terminus, the 151-residue chain is Large ribosomal subunit protein uL15 (151 aa).

Residues 1 to 51 form a disordered region; that stretch reads MKSLRLEDAVPQSGSRHRKLRVGRGHSAGQGKTSGRGMRGQKCRSGGGVRP. Positions 15–24 are enriched in basic residues; it reads SRHRKLRVGR. A compositionally biased stretch (gly residues) spans 26 to 38; that stretch reads HSAGQGKTSGRGM.

Belongs to the universal ribosomal protein uL15 family. Part of the 50S ribosomal subunit.

Binds to the 23S rRNA. The polypeptide is Large ribosomal subunit protein uL15 (Gloeobacter violaceus (strain ATCC 29082 / PCC 7421)).